Reading from the N-terminus, the 363-residue chain is Putative aryl-alcohol dehydrogenase AAD3 (363 aa).

The protein belongs to the aldo/keto reductase family. Aldo/keto reductase 2 subfamily.

The chain is Putative aryl-alcohol dehydrogenase AAD3 (AAD3) from Saccharomyces cerevisiae (strain ATCC 204508 / S288c) (Baker's yeast).